The chain runs to 2225 residues: Multifunctional protein CAD (2225 aa).

Residue Ala-2 is modified to N-acetylalanine. The GATase (Glutamine amidotransferase) stretch occupies residues 2–365; it reads AALVLEDGSV…TVREAVAGNP (364 aa). Residues Ser-44, Gly-222, and Gly-224 each coordinate L-glutamine. In terms of domain architecture, Glutamine amidotransferase type-1 spans 177–363; sequence RICALDCGLK…LETVREAVAG (187 aa). Catalysis depends on Cys-252, which acts as the Nucleophile; for GATase activity. Leu-253, Gln-256, Asn-294, Gly-296, and Phe-297 together coordinate L-glutamine. Active-site for GATase activity residues include His-336 and Glu-338. The tract at residues 366–394 is linker; it reads GGQTVKERLVQRLCPPGLLIPGSGLPPPR. The interval 395–933 is CPSase A; sequence KVLILGSGGL…NTHDLDFRTP (539 aa). The interval 395–1455 is CPSase (Carbamoyl phosphate synthase); that stretch reads KVLILGSGGL…APPLKVHVDC (1061 aa). Thr-456 bears the Phosphothreonine; by MAPK1 mark. Residues Arg-515, Arg-555, Gly-561, Gly-562, Lys-592, Glu-599, Gly-625, Ile-626, His-627, Gln-668, and Glu-682 each coordinate ATP. An ATP-grasp 1 domain is found at 519 to 711; it reads AARMAEIGEH…LAYVAAKLAL (193 aa). 3 residues coordinate Mg(2+): Gln-668, Glu-682, and Asn-684. Gln-668, Glu-682, and Asn-684 together coordinate Mn(2+). Lys-747 carries the N6-acetyllysine modification. The segment at 934–1455 is CPSase B; that stretch reads HVLVLGSGVY…APPLKVHVDC (522 aa). Residue Ser-1038 is modified to Phosphoserine. The region spanning 1052–1243 is the ATP-grasp 2 domain; the sequence is SRLLDTIGIS…LVALATRIIM (192 aa). 10 residues coordinate ATP: Arg-1088, Lys-1127, Ile-1129, Glu-1134, Gly-1159, Val-1160, His-1161, Ser-1162, Gln-1202, and Glu-1214. Mg(2+)-binding residues include Gln-1202, Glu-1214, and Asn-1216. Residues Gln-1202, Glu-1214, and Asn-1216 each coordinate Mn(2+). In terms of domain architecture, MGS-like spans 1308–1462; sequence FKIPKKNILL…VDCMTSQKLV (155 aa). Ser-1406 carries the post-translational modification Phosphoserine; by PKA. At Lys-1411 the chain carries N6-acetyllysine. Residues 1456-1788 are DHOase (dihydroorotase); it reads MTSQKLVRLP…VKGTIRRVVL (333 aa). His-1471 and His-1473 together coordinate Zn(2+). (S)-dihydroorotate contacts are provided by Arg-1475 and Asn-1505. Zn(2+)-binding residues include Lys-1556, His-1590, Cys-1613, His-1614, and Glu-1637. Lys-1556 is modified (N6-carboxylysine). Arg-1661 is a binding site for (S)-dihydroorotate. Asp-1686 is a Zn(2+) binding site. Asp-1686 serves as the catalytic For DHOase activity. His-1690 and Pro-1702 together coordinate (S)-dihydroorotate. Residues 1789 to 1917 are linker; that stretch reads RGEVAYIDGQ…GLLHPQTSPL (129 aa). Residues 1813–1911 form a disordered region; it reads PQGAVPQPPP…QNLGSSGLLH (99 aa). Positions 1825-1834 are enriched in low complexity; sequence PATTEITTTP. Position 1859 is a phosphoserine; by RPS6KB1 and PKA (Ser-1859). The segment covering 1866-1878 has biased composition (basic and acidic residues); sequence EEPKEKPSRKVVE. Ser-1873 is modified (phosphoserine; by PKC; in vitro). Phosphothreonine is present on Thr-1884. A compositionally biased stretch (polar residues) spans 1899 to 1911; it reads ASPQNLGSSGLLH. 2 positions are modified to phosphoserine: Ser-1900 and Ser-1938. An ATCase (Aspartate transcarbamylase) region spans residues 1918–2225; that stretch reads LHSLVGQHIL…ALLATVLGRF (308 aa). Carbamoyl phosphate-binding residues include Arg-1975 and Thr-1976. Lys-2003 contacts L-aspartate. 3 residues coordinate carbamoyl phosphate: Arg-2024, His-2052, and Gln-2055. The L-aspartate site is built by Arg-2085 and Arg-2146. Residues Met-2185 and Pro-2186 each coordinate carbamoyl phosphate.

It in the N-terminal section; belongs to the CarA family. This sequence in the 2nd section; belongs to the CarB family. In the 3rd section; belongs to the metallo-dependent hydrolases superfamily. DHOase family. CAD subfamily. The protein in the C-terminal section; belongs to the aspartate/ornithine carbamoyltransferase superfamily. ATCase family. Homohexamer. Interacts with CIPC. The cofactor is Zn(2+). It depends on Mg(2+) as a cofactor. Mn(2+) serves as cofactor. Activated by MAP kinase (Erk1/2) phosphorylation just prior to the S phase of the cell cycle, when the demand for pyrimidine nucleotides is greatest, and down-regulated as the cells emerge from S phase by protein kinase A (PKA) phosphorylation. Phosphorylation at Ser-1859 by RPS6KB1 downstream of MTOR promotes oligomerization and stimulates dihydroorotase activity. Phosphorylation at Ser-1406 reduces sensitivity to feedback inhibition by UTP.

Its subcellular location is the cytoplasm. The protein localises to the nucleus. The enzyme catalyses hydrogencarbonate + L-glutamine + 2 ATP + H2O = carbamoyl phosphate + L-glutamate + 2 ADP + phosphate + 2 H(+). The catalysed reaction is L-glutamine + H2O = L-glutamate + NH4(+). It carries out the reaction hydrogencarbonate + NH4(+) + 2 ATP = carbamoyl phosphate + 2 ADP + phosphate + 2 H(+). It catalyses the reaction carbamoyl phosphate + L-aspartate = N-carbamoyl-L-aspartate + phosphate + H(+). The enzyme catalyses (S)-dihydroorotate + H2O = N-carbamoyl-L-aspartate + H(+). It participates in pyrimidine metabolism; UMP biosynthesis via de novo pathway; (S)-dihydroorotate from bicarbonate: step 1/3. It functions in the pathway pyrimidine metabolism; UMP biosynthesis via de novo pathway; (S)-dihydroorotate from bicarbonate: step 2/3. Its pathway is pyrimidine metabolism; UMP biosynthesis via de novo pathway; (S)-dihydroorotate from bicarbonate: step 3/3. With respect to regulation, allosterically regulated and controlled by phosphorylation. 5-phosphoribose 1-diphosphate (PRPP) is an activator while UMP and UTP are inhibitors of the CPSase reaction. Functionally, multifunctional protein that encodes the first 3 enzymatic activities of the de novo pyrimidine pathway: carbamoylphosphate synthetase (CPSase; EC 6.3.5.5), aspartate transcarbamylase (ATCase; EC 2.1.3.2) and dihydroorotase (DHOase; EC 3.5.2.3). The CPSase-function is accomplished in 2 steps, by a glutamine-dependent amidotransferase activity (GATase) that binds and cleaves glutamine to produce ammonia, followed by an ammonium-dependent carbamoyl phosphate synthetase, which reacts with the ammonia, hydrogencarbonate and ATP to form carbamoyl phosphate. The endogenously produced carbamoyl phosphate is sequestered and channeled to the ATCase active site. ATCase then catalyzes the formation of carbamoyl-L-aspartate from L-aspartate and carbamoyl phosphate. In the last step, DHOase catalyzes the cyclization of carbamoyl aspartate to dihydroorotate. This chain is Multifunctional protein CAD (CAD), found in Mesocricetus auratus (Golden hamster).